The primary structure comprises 226 residues: Cytidylate kinase (226 aa).

10-18 (GPASSGKST) lines the ATP pocket.

The protein resides in the cytoplasm. It carries out the reaction CMP + ATP = CDP + ADP. The catalysed reaction is dCMP + ATP = dCDP + ADP. This is Cytidylate kinase from Streptococcus pyogenes serotype M6 (strain ATCC BAA-946 / MGAS10394).